We begin with the raw amino-acid sequence, 379 residues long: GPN-loop GTPase QQT2 (379 aa).

N-acetylmethionine is present on methionine 1. Position 51 to 56 (glycine 51 to serine 56) interacts with GTP. The short motif at glycine 108–asparagine 110 is the Gly-Pro-Asn (GPN)-loop; involved in dimer interface element. GTP contacts are provided by residues asparagine 211–aspartate 214 and alanine 267. Positions methionine 288–glutamate 322 form a coiled coil. 2 stretches are compositionally biased toward basic and acidic residues: residues glutamate 303 to glutamate 322 and leucine 335 to leucine 346. Residues glutamate 303–leucine 379 are disordered. The segment covering glutamate 347–aspartate 372 has biased composition (acidic residues).

It belongs to the GPN-loop GTPase family. As to quaternary structure, heterodimer with QQT1. As to expression, expressed in individual cells of roots, leaves and flowers.

The protein localises to the cytoplasm. Its subcellular location is the nucleus. It localises to the cytoskeleton. It is found in the spindle. The protein resides in the phragmoplast. Small GTPase that is essential for the correct formation of the tangential divisions in early embryos. Associates with microtubule during mitosis and may function in the positioning of the division plane. May participate in the patterning of the early embryo at the octant-dermatogen transition. In Arabidopsis thaliana (Mouse-ear cress), this protein is GPN-loop GTPase QQT2.